The following is a 37-amino-acid chain: Large ribosomal subunit protein bL36c (37 aa).

Belongs to the bacterial ribosomal protein bL36 family.

The protein resides in the plastid. It localises to the chloroplast. This Marchantia polymorpha (Common liverwort) protein is Large ribosomal subunit protein bL36c (rpl36).